Here is a 484-residue protein sequence, read N- to C-terminus: Cysteine--tRNA ligase (484 aa).

Residue Cys29 participates in Zn(2+) binding. The short motif at 31–41 (ATVQGMPHVGH) is the 'HIGH' region element. Zn(2+) contacts are provided by Cys227, His252, and Glu256. Residues 283 to 287 (KMSKS) carry the 'KMSKS' region motif. ATP is bound at residue Lys286.

The protein belongs to the class-I aminoacyl-tRNA synthetase family. Monomer. Requires Zn(2+) as cofactor.

Its subcellular location is the cytoplasm. It carries out the reaction tRNA(Cys) + L-cysteine + ATP = L-cysteinyl-tRNA(Cys) + AMP + diphosphate. This Paenarthrobacter aurescens (strain TC1) protein is Cysteine--tRNA ligase.